Consider the following 263-residue polypeptide: MELYKKGYSARTIAKILGCSKSTVCYRLYKLGITPRRGLDLNPQEIIKLYQNGYTTTEIAKIMKCSHETIRRILRNNNIDIRKSSESLIIKNTKKINLNPSESLAYILGVLNGDGSVNKQESNYVIELKVTDKDFIEEFKRNLENIGFKYINEYVRKFENKKDQYVVRVRSKGFYYWYKSLNVDYYMNVIGNNEKLMISWLKGFYDSEGSVVINKKGNYVYKYVSIANTNRNLIDVCCSFLEKLGIEYSVYCEKNNRYKSGYL.

The DOD-type homing endonuclease domain occupies 107–246; that stretch reads ILGVLNGDGS…CCSFLEKLGI (140 aa).

This is an uncharacterized protein from Methanocaldococcus jannaschii (strain ATCC 43067 / DSM 2661 / JAL-1 / JCM 10045 / NBRC 100440) (Methanococcus jannaschii).